Consider the following 246-residue polypeptide: Purine nucleoside phosphorylase Cgl2154/cg2365 (246 aa).

3 residues coordinate Zn(2+): His-68, Cys-107, and His-124.

This sequence belongs to the purine nucleoside phosphorylase YfiH/LACC1 family. Homodimer. Requires Cu(2+) as cofactor. Zn(2+) serves as cofactor.

It carries out the reaction adenosine + phosphate = alpha-D-ribose 1-phosphate + adenine. The enzyme catalyses S-methyl-5'-thioadenosine + phosphate = 5-(methylsulfanyl)-alpha-D-ribose 1-phosphate + adenine. The catalysed reaction is inosine + phosphate = alpha-D-ribose 1-phosphate + hypoxanthine. It catalyses the reaction adenosine + H2O + H(+) = inosine + NH4(+). In terms of biological role, purine nucleoside enzyme that catalyzes the phosphorolysis of adenosine and inosine nucleosides, yielding D-ribose 1-phosphate and the respective free bases, adenine and hypoxanthine. Also catalyzes the phosphorolysis of S-methyl-5'-thioadenosine into adenine and S-methyl-5-thio-alpha-D-ribose 1-phosphate. Also has adenosine deaminase activity. In Corynebacterium glutamicum (strain ATCC 13032 / DSM 20300 / JCM 1318 / BCRC 11384 / CCUG 27702 / LMG 3730 / NBRC 12168 / NCIMB 10025 / NRRL B-2784 / 534), this protein is Purine nucleoside phosphorylase Cgl2154/cg2365.